The sequence spans 252 residues: Imidazole glycerol phosphate synthase subunit HisF (252 aa).

Residues Asp11 and Asp130 contribute to the active site.

It belongs to the HisA/HisF family. In terms of assembly, heterodimer of HisH and HisF.

Its subcellular location is the cytoplasm. It catalyses the reaction 5-[(5-phospho-1-deoxy-D-ribulos-1-ylimino)methylamino]-1-(5-phospho-beta-D-ribosyl)imidazole-4-carboxamide + L-glutamine = D-erythro-1-(imidazol-4-yl)glycerol 3-phosphate + 5-amino-1-(5-phospho-beta-D-ribosyl)imidazole-4-carboxamide + L-glutamate + H(+). It functions in the pathway amino-acid biosynthesis; L-histidine biosynthesis; L-histidine from 5-phospho-alpha-D-ribose 1-diphosphate: step 5/9. In terms of biological role, IGPS catalyzes the conversion of PRFAR and glutamine to IGP, AICAR and glutamate. The HisF subunit catalyzes the cyclization activity that produces IGP and AICAR from PRFAR using the ammonia provided by the HisH subunit. This Pelotomaculum thermopropionicum (strain DSM 13744 / JCM 10971 / SI) protein is Imidazole glycerol phosphate synthase subunit HisF.